A 303-amino-acid chain; its full sequence is tRNA pseudouridine synthase A (303 aa).

Residue Asp-59 is the Nucleophile of the active site. Residue Tyr-128 coordinates substrate.

Belongs to the tRNA pseudouridine synthase TruA family. Homodimer.

The catalysed reaction is uridine(38/39/40) in tRNA = pseudouridine(38/39/40) in tRNA. Formation of pseudouridine at positions 38, 39 and 40 in the anticodon stem and loop of transfer RNAs. The protein is tRNA pseudouridine synthase A of Bifidobacterium longum (strain DJO10A).